We begin with the raw amino-acid sequence, 114 residues long: Nuclear transition protein 2 (114 aa).

Residues 1-114 (MDTKMQSLPT…KRRSSGRRYK (114 aa)) form a disordered region. Residues H12, H14, H16, H24, C29, C31, C35, and C38 each coordinate Zn(2+). The span at 16-25 (HSSSRPQSHT) shows a compositional bias: low complexity. Residues 87 to 95 (GKVSKRKAV) carry the Nuclear localization signal motif. The span at 90-114 (SKRKAVRRRKRTHRAKRRSSGRRYK) shows a compositional bias: basic residues. Residue T101 is modified to Phosphothreonine; by PKA. At S109 the chain carries Phosphoserine; by PKA.

Belongs to the nuclear transition protein 2 family. As to expression, testis.

It is found in the nucleus. It localises to the nucleolus. The protein localises to the chromosome. Its function is as follows. Plays a key role in the replacement of histones to protamine in the elongating spermatids of mammals. In condensing spermatids, loaded onto the nucleosomes, where it promotes the recruitment and processing of protamines, which are responsible for histone eviction. The chain is Nuclear transition protein 2 (Tnp2) from Rattus norvegicus (Rat).